A 708-amino-acid chain; its full sequence is Leukotoxin translocation ATP-binding protein LktB (708 aa).

One can recognise a Peptidase C39 domain in the interval 1 to 126; the sequence is MEANHQRNDL…ACYQGQLILV (126 aa). An ABC transmembrane type-1 domain is found at 155-437; the sequence is FLETLIVSIF…LAQLWQDFQQ (283 aa). The next 5 membrane-spanning stretches (helical) occupy residues 159–179, 192–212, 270–290, 296–316, and 389–409; these read LIVS…FQVV, LNII…LSGL, ALTS…MWYY, LVIL…SPIL, and VMVI…LSIG. In terms of domain architecture, ABC transporter spans 469-704; it reads ISFKNIRFRY…SNGLYSYLHQ (236 aa). 503–510 is a binding site for ATP; it reads GRSGSGKS.

Belongs to the ABC transporter superfamily. Protein-1 exporter (TC 3.A.1.109) family. As to quaternary structure, homodimer.

The protein resides in the cell inner membrane. It catalyses the reaction ATP + H2O + proteinSide 1 = ADP + phosphate + proteinSide 2.. Functionally, part of the ABC transporter complex LktBD involved in leukotoxin export. Transmembrane domains (TMD) form a pore in the inner membrane and the ATP-binding domain (NBD) is responsible for energy generation. The polypeptide is Leukotoxin translocation ATP-binding protein LktB (lktB) (Mannheimia haemolytica (Pasteurella haemolytica)).